The chain runs to 260 residues: Zinc import ATP-binding protein ZnuC (260 aa).

The region spanning 18–234 (IRLQEVAVTF…PEYQKLFGSH (217 aa)) is the ABC transporter domain. 50-57 (GNNGAGKT) contacts ATP. Residues 241–260 (VFPHDHHDHSGPALAGGGRG) form a disordered region.

This sequence belongs to the ABC transporter superfamily. Zinc importer (TC 3.A.1.15.5) family. The complex is composed of two ATP-binding proteins (ZnuC), two transmembrane proteins (ZnuB) and a solute-binding protein (ZnuA).

It is found in the cell inner membrane. It catalyses the reaction Zn(2+)(out) + ATP(in) + H2O(in) = Zn(2+)(in) + ADP(in) + phosphate(in) + H(+)(in). Its function is as follows. Part of the ABC transporter complex ZnuABC involved in zinc import. Responsible for energy coupling to the transport system. The polypeptide is Zinc import ATP-binding protein ZnuC (Halorhodospira halophila (strain DSM 244 / SL1) (Ectothiorhodospira halophila (strain DSM 244 / SL1))).